Reading from the N-terminus, the 232-residue chain is Protein TIFY 10c (232 aa).

Residues 54 to 73 form a disordered region; the sequence is PPAAGAGGAFRPPPTTMNLL. The Tify domain maps to 114-149; that stretch reads AGEKAQQLTIFYGGKVVVFENFPSTKVKDLLQIVST. Residues 151–176 form a disordered region; it reads DGVDKNTGTAATQSLPRPAHNSLPDL. The span at 156-165 shows a compositional bias: polar residues; that stretch reads NTGTAATQSL. Positions 177–202 match the Jas motif; that stretch reads PIARRNSLHRFLEKRKGRMNANAPYQ. The Nuclear localization signal signature appears at 179–186; that stretch reads ARRNSLHR.

It belongs to the TIFY/JAZ family. As to quaternary structure, interacts with BHLH148. Interacts with COI1B in a coronatine-dependent manner. Coronatine is an analog of jasmonoyl isoleucine (JA-Ile). Interacts with TIFY5/JAZ2, TIFY6B/JAZ4, TIFY9/JAZ5, TIFY11A, TIFY11D/JAZ12 and TIFY11G/JAZ15. In terms of processing, ubiquitinated. Increase in jasmonoyl isoleucine (JA-Ile) levels mediates its degradation via COI1B-mediated proteasome pathway.

The protein localises to the nucleus. It is found in the cytoplasm. Its subcellular location is the cytosol. Functionally, repressor of jasmonate (JA) responses. Acts as a repressor of JA-induced resistance to the bacterial blight pathogen Xanthomonas oryzae pv. oryzae (Xoo). Regulates JA-induced accumulation of linalool at the transcriptional level of linalool synthase gene LIS. Linalool is important for resistance to bacterial blight pathogen Xoo. The protein is Protein TIFY 10c of Oryza sativa subsp. indica (Rice).